Here is a 133-residue protein sequence, read N- to C-terminus: Small ribosomal subunit protein uS8 (133 aa).

This sequence belongs to the universal ribosomal protein uS8 family. As to quaternary structure, part of the 30S ribosomal subunit. Contacts proteins S5 and S12.

Functionally, one of the primary rRNA binding proteins, it binds directly to 16S rRNA central domain where it helps coordinate assembly of the platform of the 30S subunit. This is Small ribosomal subunit protein uS8 from Gloeothece citriformis (strain PCC 7424) (Cyanothece sp. (strain PCC 7424)).